The chain runs to 237 residues: 2-C-methyl-D-erythritol 4-phosphate cytidylyltransferase (237 aa).

Belongs to the IspD/TarI cytidylyltransferase family. IspD subfamily.

It carries out the reaction 2-C-methyl-D-erythritol 4-phosphate + CTP + H(+) = 4-CDP-2-C-methyl-D-erythritol + diphosphate. It participates in isoprenoid biosynthesis; isopentenyl diphosphate biosynthesis via DXP pathway; isopentenyl diphosphate from 1-deoxy-D-xylulose 5-phosphate: step 2/6. Its function is as follows. Catalyzes the formation of 4-diphosphocytidyl-2-C-methyl-D-erythritol from CTP and 2-C-methyl-D-erythritol 4-phosphate (MEP). This is 2-C-methyl-D-erythritol 4-phosphate cytidylyltransferase from Vibrio vulnificus (strain CMCP6).